We begin with the raw amino-acid sequence, 450 residues long: Probable helicase D10 (450 aa).

In terms of domain architecture, Helicase ATP-binding spans 95-240; sequence PIYEECDDTC…MFKDFFGYKI (146 aa). 108 to 115 serves as a coordination point for ATP; the sequence is GKPGFGKT. The DEAH box motif lies at 193–196; that stretch reads DEVH. The region spanning 289–439 is the Helicase C-terminal domain; it reads NLAHLYVNMG…TITMTPEKAV (151 aa).

The catalysed reaction is ATP + H2O = ADP + phosphate + H(+). This is Probable helicase D10 (D10) from Escherichia phage T5 (Enterobacteria phage T5).